Reading from the N-terminus, the 245-residue chain is Dehydrogenase/reductase SDR family member 6 (245 aa).

NAD(+) is bound by residues 16–18 (QGI), Asp37, and Asp58. Substrate is bound at residue Arg144. Tyr147 functions as the Proton acceptor in the catalytic mechanism. NAD(+)-binding positions include Lys151 and 180–184 (VDTPS). Residues Arg188 and Arg205 each contribute to the substrate site.

It belongs to the short-chain dehydrogenases/reductases (SDR) family. In terms of assembly, homotetramer.

It is found in the cytoplasm. The enzyme catalyses cis-4-hydroxy-L-proline + NAD(+) = 4-oxo-L-proline + NADH + H(+). It catalyses the reaction (R)-3-hydroxybutanoate + NAD(+) = acetoacetate + NADH + H(+). Its pathway is amino-acid metabolism. The protein operates within siderophore biosynthesis. NAD(H)-dependent dehydrogenase/reductase with a preference for cyclic substrates. Catalyzes stereoselective conversion of 4-oxo-L-proline to cis-4-hydroxy-L-proline, likely a detoxification mechanism for ketoprolines. Mediates the formation of 2,5-dihydroxybenzoate (2,5-DHBA), a siderophore that chelates free cytoplasmic iron and associates with LCN2, thereby regulating iron transport and homeostasis while protecting cells against free radical-induced oxidative stress. The iron-siderophore complex is imported into mitochondria, providing an iron source for mitochondrial metabolic processes in particular heme synthesis. May act as a 3-hydroxybutyrate dehydrogenase. This chain is Dehydrogenase/reductase SDR family member 6 (BDH2), found in Bos taurus (Bovine).